The primary structure comprises 505 residues: AAA-ATPase At5g17760 (505 aa).

A helical membrane pass occupies residues 11 to 27 (TSVFTAYASMAGYMMMI). Residues 136-155 (GGGGGVGGRGGGGGRRGGMD) are disordered. A compositionally biased stretch (gly residues) spans 137 to 151 (GGGGVGGRGGGGGRR). An ATP-binding site is contributed by 260 to 267 (GPPGTGKS).

Belongs to the AAA ATPase family. BCS1 subfamily. Mg(2+) serves as cofactor.

It is found in the membrane. The catalysed reaction is ATP + H2O = ADP + phosphate + H(+). The protein is AAA-ATPase At5g17760 of Arabidopsis thaliana (Mouse-ear cress).